Consider the following 1256-residue polypeptide: Octopamine receptor beta-3R (1256 aa).

The Extracellular segment spans residues 1–143 (MSGVNVADLL…LDLSLLLLKG (143 aa)). N-linked (GlcNAc...) asparagine glycosylation is found at Asn36, Asn113, and Asn117. Residues 144 to 164 (FIFSSIILAAVLGNALVIISV) form a helical membrane-spanning segment. Topologically, residues 165–171 (QRNRKLR) are cytoplasmic. Residues 172–192 (VITNYFVVSLAMADMLVALCA) traverse the membrane as a helical segment. The Extracellular portion of the chain corresponds to 193–213 (MTFNASVELSGGKWMFGPFMC). N-linked (GlcNAc...) asparagine glycosylation occurs at Asn196. Residues 214–236 (NVYNSLDVYFSTASILHLCCISV) traverse the membrane as a helical segment. Residues 237–258 (DRYYAIVRPLEYPLNMTHKTVC) lie on the Cytoplasmic side of the membrane. A helical transmembrane segment spans residues 259-279 (FMLANVWILPALISFTPIFLG). The Extracellular segment spans residues 280 to 305 (WYTTEEHLREISLHPDQCSFVVNKAY). A helical transmembrane segment spans residues 306–326 (ALISSSVSFWIPGIVMLVMYW). Topologically, residues 327-1169 (RIFKEAIRQR…WKAEHKAART (843 aa)) are cytoplasmic. Disordered regions lie at residues 377-427 (AREE…DLRD), 480-512 (ELDK…ESTA), 665-698 (LSHS…NKPD), 751-774 (GESP…EPSG), and 1087-1117 (DTTV…SSTR). Residues 396 to 406 (TDEDDDRDECD) show a composition bias toward acidic residues. Positions 489 to 498 (NGPQQQLSLT) are enriched in polar residues. Pro residues predominate over residues 757-770 (PATPPPSLSPPELP). Residues 1170–1190 (LGIIMGVFLLCWLPFFLWYVI) traverse the membrane as a helical segment. The Extracellular portion of the chain corresponds to 1191-1202 (TSLCGPACPCPD). Residues 1203-1223 (VLVVVLFWIGYFNSTLNPLIY) form a helical membrane-spanning segment. Topologically, residues 1224–1256 (AYFNRDFREAFRNTLECVLPCLEKRNPYNAYYV) are cytoplasmic.

Belongs to the G-protein coupled receptor 1 family. In terms of tissue distribution, in the adult, expressed in the inferior and superior protocerebrum, the posterior lateral protocerebrum, the deutocerebrum, the surface of the subesophageal ganglion, the lateral cell body region, the cortical layer of the ventral nerve cord and the optic lobe medulla of the central nervous system (CNS). Also expressed in the nurse cells and follicle cells of the egg chambers in the ovary at oogenic stages 1-10, and spermatogonia and spermatocytes in the testis. Expressed ubiquitously in the embryonic CNS. In larvae, expressed in the ventral cortical layer of the ventral nerve cord, the cortical layer of the brain lobes, salivary glands, midgut, imaginal disks and developing reproductive organs. Expressed in the larval prothoracic gland with weak expression in other regions of the ring gland.

The protein resides in the cell membrane. Functionally, autoreceptor for octopamine, which is a neurotransmitter, neurohormone, and neuromodulator in invertebrates. Probably also acts as a receptor for tyramine during ecdysone biosynthesis. Required for the biosynthesis of the steroid hormone ecdysone which is necessary for metamorphosis. Involved in activation of prothoracicotropic hormone and insulin-like peptide signaling which is required for the expression of ecdysone biosynthetic genes. This chain is Octopamine receptor beta-3R, found in Drosophila melanogaster (Fruit fly).